The chain runs to 421 residues: Elongation factor 1-alpha (421 aa).

The tr-type G domain maps to 4 to 220 (NRHQNLAVIG…NGLPVPQPPT (217 aa)). Positions 13-20 (GHVDHGKS) are G1. 13–20 (GHVDHGKS) contributes to the GTP binding site. Position 20 (Ser20) interacts with Mg(2+). Residues 69-73 (GVTID) form a G2 region. Residues 90–93 (DCPG) are G3. GTP is bound by residues 90–94 (DCPGH) and 145–148 (NKMD). A G4 region spans residues 145–148 (NKMD). Residues 184 to 186 (SAF) form a G5 region.

This sequence belongs to the TRAFAC class translation factor GTPase superfamily. Classic translation factor GTPase family. EF-Tu/EF-1A subfamily.

It localises to the cytoplasm. The catalysed reaction is GTP + H2O = GDP + phosphate + H(+). In terms of biological role, GTP hydrolase that promotes the GTP-dependent binding of aminoacyl-tRNA to the A-site of ribosomes during protein biosynthesis. The sequence is that of Elongation factor 1-alpha from Halobacterium salinarum (strain ATCC 700922 / JCM 11081 / NRC-1) (Halobacterium halobium).